The following is a 569-amino-acid chain: RNA demethylase ALKBH10B (569 aa).

Residues 118-151 adopt a coiled-coil conformation; that stretch reads QKVAAKKAEDLKQKKTEEEAEEDLKEVVATEEEE. The interval 164-190 is disordered; sequence ENDVNGDVEDVEDDSPTSDITDSGSHQ. Residues 167–179 show a composition bias toward acidic residues; the sequence is VNGDVEDVEDDSP. Positions 180–189 are enriched in polar residues; the sequence is TSDITDSGSH. Fe cation-binding residues include His-366, Glu-368, and His-421. Arg-430 contacts 2-oxoglutarate. Over residues 531–545 the composition is skewed to basic residues; sequence KHVKHLPPRAQKKRL. Residues 531–569 form a disordered region; sequence KHVKHLPPRAQKKRLLPLPPAASSSPAGGSTSEPVITVG. Positions 551 to 560 are enriched in low complexity; it reads AASSSPAGGS.

Belongs to the alkB family. Requires Fe(2+) as cofactor.

The catalysed reaction is an N(6)-methyladenosine in mRNA + 2-oxoglutarate + O2 = an adenosine in mRNA + formaldehyde + succinate + CO2. Its function is as follows. Dioxygenase that demethylates RNA by oxidative demethylation: specifically demethylates N(6)-methyladenosine (m6A) RNA, the most prevalent internal modification of messenger RNA (mRNA) in higher eukaryotes. ALKBH10B-mediated mRNA m6A demethylation stabilizes the mRNA of the key flowering time regulators FT, SPL3 and SPL9, which are involved in the control of floral transition. The sequence is that of RNA demethylase ALKBH10B from Arabidopsis thaliana (Mouse-ear cress).